The following is a 205-amino-acid chain: Isochorismatase domain-containing protein 2 (205 aa).

Phosphoserine is present on residues serine 7 and serine 202.

It belongs to the isochorismatase family. As to quaternary structure, interacts with CDKN2A.

The protein localises to the cytoplasm. It localises to the nucleus. The chain is Isochorismatase domain-containing protein 2 (ISOC2) from Homo sapiens (Human).